A 267-amino-acid polypeptide reads, in one-letter code: Coiled-coil domain-containing protein 172 (267 aa).

Coiled coils occupy residues 24 to 97 (MREV…CEAI) and 128 to 191 (LMKE…EETE).

Belongs to the CCDC172 family. May interact with TEKT2.

The protein resides in the cytoplasm. Its subcellular location is the cell projection. It is found in the cilium. The protein is Coiled-coil domain-containing protein 172 (Ccdc172) of Mus musculus (Mouse).